We begin with the raw amino-acid sequence, 704 residues long: MAQAENACRLKLLRADVPVDLLPAGCSATDLQPAVNVKEKIEVNGESRLVQKKKTLYPEWEKCWDTAVAEGRILQIVLMFNQTPVVEATMRLEDIISKCKSDAITHIWINTKPNGRILAQTRHLKNAPDDDHPVEDIMTSRSNSGPGIQRRRGAIKHARVHEIRGHQFVATFFRQPHFCSLCSDFMWGLNKQGYQCQLCSAAVHKKCHEKVIMQCPGSAKNTKETMALKERFKVDIPHRFKTYNFKSPTFCDHCGSMLYGLFKQGLRCEVCNVACHHKCERLMSNLCGVNQKQLSEMYHEIKRGTHATASCPPNIANLHLNGETSKNNGSLPNKLKNLFKSHQYSVEEQKETDEYMDNIWGGGDGPVKKFALPHFNLLKVLGKGSFGKVMLVELKGKNEFYAMKCLKKDVILEDDDTECTYIERRVLILASQCPFLCQLFCSFQTNEYLFFVMEYLNGGDLMHHIQQIKKFDEARTRFYACEIVVALQFLHTNNIIYRDLKLDNVLLDCDGHIKLADFGMAKTEMNRENGMASTFCGTPDYISPEIIKGQLYNEAVDFWSFGVLMYEMLVGQSPFHGEGEDELFDSILNERPYFPKTISKEAAKCLSALFDRNPNTRLGMPECPDGPIRQHCFFRGVDWKRFENRQVPPPFKPNIKSNSDASNFDDDFTNEKAALTPVHDKNLLASIDPEAFLNFSYTNPHFSK.

A phosphothreonine; by autocatalysis mark is found at Thr-89 and Thr-139. Phorbol-ester/DAG-type zinc fingers lie at residues 165–215 (GHQF…IMQC) and 237–287 (PHRF…SNLC). Position 324 is a phosphothreonine; by autocatalysis (Thr-324). One can recognise a Protein kinase domain in the interval 375–634 (FNLLKVLGKG…DGPIRQHCFF (260 aa)). ATP is bound by residues 381 to 389 (LGKGSFGKV) and Lys-404. The active-site Proton acceptor is Asp-499. Positions 635–704 (RGVDWKRFEN…FSYTNPHFSK (70 aa)) constitute an AGC-kinase C-terminal domain.

Belongs to the protein kinase superfamily. AGC Ser/Thr protein kinase family. PKC subfamily.

It carries out the reaction L-seryl-[protein] + ATP = O-phospho-L-seryl-[protein] + ADP + H(+). The catalysed reaction is L-threonyl-[protein] + ATP = O-phospho-L-threonyl-[protein] + ADP + H(+). Its function is as follows. Diacylglycerol (DAG)-dependent serine/threonine-protein kinase that phosphorylates a range of cellular proteins. Phosphorylates mlk-1, a component of the JNK pathway. Involved in axon regeneration after injury probably by activating the JNK pathway. Plays a role in resistance to fungal infection and in wound healing by promoting expression of antimicrobial peptide nlp-29 in the epidermis downstream of gpa-12 and plc-3 and upstream of tir-1-p38-like pathway. Probably by regulating neuronal transmission in ALA neurons, regulates the decrease in pharyngeal pumping during the quiescent state that precedes each larval molt, downstream of lin-3 and receptor let-23 and phospholipase plc-3. The polypeptide is Protein kinase C-like 1 (tpa-1) (Caenorhabditis elegans).